A 206-amino-acid chain; its full sequence is Amelogenin, Y isoform (206 aa).

Residues 1 to 16 (MGTWILFACLVGAAFA) form the signal peptide. The segment at 118 to 180 (VPGQQSMTPT…PPLPPMFPLR (63 aa)) is disordered. Residues 128 to 142 (QHHQPNLPLPAQQPF) show a composition bias toward low complexity. Residues 143-180 (QPQPVQPQPHQPMQPQPPVQPMQPLLPQPPLPPMFPLR) are compositionally biased toward pro residues.

The protein belongs to the amelogenin family.

It localises to the secreted. Its subcellular location is the extracellular space. It is found in the extracellular matrix. Plays a role in biomineralization. Seems to regulate the formation of crystallites during the secretory stage of tooth enamel development. Thought to play a major role in the structural organization and mineralization of developing enamel. This chain is Amelogenin, Y isoform (AMELY), found in Homo sapiens (Human).